A 282-amino-acid polypeptide reads, in one-letter code: MAFDWFKRKTKNITTSTEDKKDVPKGLWHQTPTGKIIEHEELKANNYVSPEDGFHVRIGSREFFSILFDDNKFTELDANVESVDMLGFKDTKAYVDRLKEVKAKTKLTDSIRNAVGRVNGEQMVISCMDFAFIGGSLGSVMGEKIRRAVDYCIANRLPYMIICQSGGARMQEATYSLMQLAKVQAKLAQLSEEGLLYIAYLCDPTFGGITASFAMTADIIMAEPGALIGFAGPRVIRETIGKDLPEGFQTSEFLQEKGFVDFIVKRTEIKEKVSKTVKLLVH.

Positions 26-282 (GLWHQTPTGK…VSKTVKLLVH (257 aa)) constitute a CoA carboxyltransferase N-terminal domain.

The protein belongs to the AccD/PCCB family. In terms of assembly, acetyl-CoA carboxylase is a heterohexamer composed of biotin carboxyl carrier protein (AccB), biotin carboxylase (AccC) and two subunits each of ACCase subunit alpha (AccA) and ACCase subunit beta (AccD).

Its subcellular location is the cytoplasm. It carries out the reaction N(6)-carboxybiotinyl-L-lysyl-[protein] + acetyl-CoA = N(6)-biotinyl-L-lysyl-[protein] + malonyl-CoA. It functions in the pathway lipid metabolism; malonyl-CoA biosynthesis; malonyl-CoA from acetyl-CoA: step 1/1. In terms of biological role, component of the acetyl coenzyme A carboxylase (ACC) complex. Biotin carboxylase (BC) catalyzes the carboxylation of biotin on its carrier protein (BCCP) and then the CO(2) group is transferred by the transcarboxylase to acetyl-CoA to form malonyl-CoA. The chain is Acetyl-coenzyme A carboxylase carboxyl transferase subunit beta from Flavobacteriaceae bacterium (strain 3519-10).